A 162-amino-acid polypeptide reads, in one-letter code: Endoribonuclease YbeY (162 aa).

Zn(2+) contacts are provided by H130, H134, and H140.

Belongs to the endoribonuclease YbeY family. Zn(2+) is required as a cofactor.

It is found in the cytoplasm. Functionally, single strand-specific metallo-endoribonuclease involved in late-stage 70S ribosome quality control and in maturation of the 3' terminus of the 16S rRNA. This Nitratidesulfovibrio vulgaris (strain ATCC 29579 / DSM 644 / CCUG 34227 / NCIMB 8303 / VKM B-1760 / Hildenborough) (Desulfovibrio vulgaris) protein is Endoribonuclease YbeY.